Here is a 151-residue protein sequence, read N- to C-terminus: Sperm surface protein Sp17 (151 aa).

Disordered regions lie at residues 56-115 and 127-151; these read DPAE…EKEE and GHIA…EENK. Residues 62-98 show a composition bias toward basic and acidic residues; the sequence is SKVEDRFYNNHAFEEQEPPEKSDPKQEESQISGKEEE. An IQ domain is found at 114–143; that stretch reads EEVAAVKIQAAFRGHIAREEAKKMKTNSLQ.

As to quaternary structure, homodimer. May interact with ROPN1. Testis and sperm specific.

Its subcellular location is the membrane. Sperm surface zona pellucida binding protein. Helps to bind spermatozoa to the zona pellucida with high affinity. Might function in binding zona pellucida and carbohydrates. This is Sperm surface protein Sp17 (SPA17) from Homo sapiens (Human).